The following is a 64-amino-acid chain: Large ribosomal subunit protein bL35 (64 aa).

This sequence belongs to the bacterial ribosomal protein bL35 family.

The sequence is that of Large ribosomal subunit protein bL35 from Leifsonia xyli subsp. xyli (strain CTCB07).